A 77-amino-acid polypeptide reads, in one-letter code: Large ribosomal subunit protein bL31 (77 aa).

The protein belongs to the bacterial ribosomal protein bL31 family. Type A subfamily. Part of the 50S ribosomal subunit.

Binds the 23S rRNA. In Synechococcus elongatus (strain ATCC 33912 / PCC 7942 / FACHB-805) (Anacystis nidulans R2), this protein is Large ribosomal subunit protein bL31.